Here is a 593-residue protein sequence, read N- to C-terminus: Prospero homeobox protein 2 (593 aa).

6 disordered regions span residues 24 to 48 (CMDQ…QLPS), 79 to 130 (SPSS…GGTR), 153 to 199 (TEPR…KDLC), 260 to 284 (QERS…SAYK), 298 to 333 (PQAG…QSPL), and 356 to 388 (GRGP…PWGL). The span at 87 to 99 (RARESLRCPEKGR) shows a compositional bias: basic and acidic residues. Over residues 167 to 181 (PRSSPRARPRNSCSS) the composition is skewed to low complexity. Residues 363 to 380 (WSGSPPQDAAFQSHTSPE) are compositionally biased toward polar residues. Residues 433-491 (QEGLSPGHLKKAKLMFFFTRYPSSSLLKAYFPDVQFNRCITSQMIKWFSNFREFYYIQM) enclose the Prospero-type homeo domain. The homeo-Prospero stretch occupies residues 433–591 (QEGLSPGHLK…KSPSFLPGLF (159 aa)). The region spanning 492-591 (EKYARQALSD…KSPSFLPGLF (100 aa)) is the Prospero domain.

The protein belongs to the Prospero homeodomain family. In terms of tissue distribution, expressed in testis.

The protein localises to the nucleus. Functionally, transcription regulator. Does not seem to be essential for embryonic development and postnatal survival. The sequence is that of Prospero homeobox protein 2 (Prox2) from Mus musculus (Mouse).